The sequence spans 345 residues: Platelet-derived growth factor C (345 aa).

Residues 1-22 (MLLFGFLLLTFALVSQRQGAEA) form the signal peptide. N-linked (GlcNAc...) asparagine glycans are attached at residues Asn25 and Asn55. The CUB domain occupies 46–163 (HEKIITVSAN…PGFCIHYTLL (118 aa)). Intrachain disulfides connect Cys104–Cys124, Cys250–Cys294, Cys280–Cys335, and Cys287–Cys337.

Belongs to the PDGF/VEGF growth factor family. Homodimer; disulfide-linked. Interacts with PDGFRA homodimers, and with heterodimers formed by PDGFRA and PDGFRB. Post-translationally, proteolytic removal of the N-terminal CUB domain releasing the core domain is necessary for unmasking the receptor-binding epitopes of the core domain. Cleavage after basic residues in the hinge region (region connecting the CUB and growth factor domains) gives rise to the receptor-binding form.

It localises to the secreted. In terms of biological role, growth factor that plays an essential role in the regulation of embryonic development, cell proliferation, cell migration, survival and chemotaxis. Potent mitogen and chemoattractant for cells of mesenchymal origin. Required for normal skeleton formation during embryonic development. Required for normal skin morphogenesis during embryonic development. Plays an important role in wound healing, in angiogenesis and blood vessel development. This chain is Platelet-derived growth factor C (PDGFC), found in Gekko japonicus (Schlegel's Japanese gecko).